An 81-amino-acid chain; its full sequence is Sulfur carrier protein TusA (81 aa).

The active-site Cysteine persulfide intermediate is C19.

Belongs to the sulfur carrier protein TusA family.

The protein resides in the cytoplasm. Its function is as follows. Sulfur carrier protein which probably makes part of a sulfur-relay system. The polypeptide is Sulfur carrier protein TusA (Shewanella sediminis (strain HAW-EB3)).